The following is a 149-amino-acid chain: Deoxyuridine 5'-triphosphate nucleotidohydrolase (149 aa).

Substrate contacts are provided by residues 68–70 (RSG), Asn-81, and 85–87 (LID).

The protein belongs to the dUTPase family. Requires Mg(2+) as cofactor.

It carries out the reaction dUTP + H2O = dUMP + diphosphate + H(+). It participates in pyrimidine metabolism; dUMP biosynthesis; dUMP from dCTP (dUTP route): step 2/2. This enzyme is involved in nucleotide metabolism: it produces dUMP, the immediate precursor of thymidine nucleotides and it decreases the intracellular concentration of dUTP so that uracil cannot be incorporated into DNA. The protein is Deoxyuridine 5'-triphosphate nucleotidohydrolase of Laribacter hongkongensis (strain HLHK9).